The following is a 469-amino-acid chain: Glutamate--tRNA ligase (469 aa).

The 'HIGH' region motif lies at 11–21; it reads PSPTGFIHLGN. The span at 116-131 shows a compositional bias: basic and acidic residues; the sequence is ASGEKPRYDGTWRPEP. The disordered stretch occupies residues 116-139; the sequence is ASGEKPRYDGTWRPEPGKVLPTPP. The short motif at 243 to 247 is the 'KMSKS' region element; that stretch reads KMSKR. Lysine 246 is an ATP binding site.

Belongs to the class-I aminoacyl-tRNA synthetase family. Glutamate--tRNA ligase type 1 subfamily. In terms of assembly, monomer.

The protein resides in the cytoplasm. The enzyme catalyses tRNA(Glu) + L-glutamate + ATP = L-glutamyl-tRNA(Glu) + AMP + diphosphate. Its function is as follows. Catalyzes the attachment of glutamate to tRNA(Glu) in a two-step reaction: glutamate is first activated by ATP to form Glu-AMP and then transferred to the acceptor end of tRNA(Glu). This is Glutamate--tRNA ligase from Paraburkholderia phymatum (strain DSM 17167 / CIP 108236 / LMG 21445 / STM815) (Burkholderia phymatum).